A 255-amino-acid polypeptide reads, in one-letter code: Diphthine synthase (255 aa).

Residues Leu-9, Asp-85, Val-88, Ser-113–Ile-114, Leu-164, Ala-207, and His-232 each bind S-adenosyl-L-methionine.

It belongs to the diphthine synthase family. As to quaternary structure, homodimer.

The catalysed reaction is 2-[(3S)-amino-3-carboxypropyl]-L-histidyl-[translation elongation factor 2] + 3 S-adenosyl-L-methionine = diphthine-[translation elongation factor 2] + 3 S-adenosyl-L-homocysteine + 3 H(+). It functions in the pathway protein modification; peptidyl-diphthamide biosynthesis. Its function is as follows. S-adenosyl-L-methionine-dependent methyltransferase that catalyzes the trimethylation of the amino group of the modified target histidine residue in translation elongation factor 2 (EF-2), to form an intermediate called diphthine. The three successive methylation reactions represent the second step of diphthamide biosynthesis. In Methanococcus maripaludis (strain C6 / ATCC BAA-1332), this protein is Diphthine synthase.